The sequence spans 152 residues: Transcriptional regulator MraZ (152 aa).

2 consecutive SpoVT-AbrB domains span residues 5 to 52 (ATLV…PLPE) and 81 to 124 (ASEC…DETT).

This sequence belongs to the MraZ family. As to quaternary structure, forms oligomers.

It is found in the cytoplasm. The protein localises to the nucleoid. Negatively regulates its own expression and that of the subsequent genes in the proximal part of the division and cell wall (dcw) gene cluster. Acts by binding directly to DNA. May also regulate the expression of genes outside the dcw cluster. The chain is Transcriptional regulator MraZ from Shigella sonnei (strain Ss046).